Consider the following 275-residue polypeptide: Probable 2' cyclic ADP-D-ribose synthase TcpB (275 aa).

Residues 17–32 (RLKADDSREMSKEKQA) show a composition bias toward basic and acidic residues. Residues 17–66 (RLKADDSREMSKEKQAQSKAHKAQQAISSAKSLSTQKSKMSELERATRDG) are disordered. Residues 39–48 (AQQAISSAKS) show a composition bias toward low complexity. Residues 55-64 (KMSELERATR) show a composition bias toward basic and acidic residues. Positions 142-275 (EEYDFFISHA…EIAKELHSLI (134 aa)) constitute a TIR domain. NAD(+) contacts are provided by residues 151-152 (AS) and lysine 181. Glutamate 217 is a catalytic residue.

Homodimer. Interacts with host TIRAP, and probably host MYD88. Interacts with host TLR4, abolishes the interaction of host TIRAP with TLR4.

The protein resides in the secreted. Its subcellular location is the host cell membrane. It carries out the reaction NAD(+) + H2O = ADP-D-ribose + nicotinamide + H(+). It catalyses the reaction NAD(+) = 2'cADPR + nicotinamide + H(+). In terms of biological role, virulence factor that interferes with host Toll-like receptor 2 (TLR2) and TLR4 signaling, resulting in the reduction of dendritic cell maturation, inhibition of pro-inflammatory cytokine secretion and impaired NF-kappa-B activation in macrophages. Binds host lipids. Has NAD(+) hydrolase (NADase) activity, catalyzes cleavage of NAD(+) into ADP-D-ribose (ADPR) and nicotinamide, also generates a cyclization variant of cyclic ADPR (cADPR), termed v-cADPR (probably 2'cADPR). This Brucella melitensis biotype 2 (strain ATCC 23457) protein is Probable 2' cyclic ADP-D-ribose synthase TcpB (tcpB).